Here is a 486-residue protein sequence, read N- to C-terminus: Ribosomal RNA small subunit methyltransferase F (486 aa).

S-adenosyl-L-methionine-binding positions include 124-130, E148, D175, and D193; that span reads ASAPGSK. The active-site Nucleophile is the C246.

Belongs to the class I-like SAM-binding methyltransferase superfamily. RsmB/NOP family.

It localises to the cytoplasm. The catalysed reaction is cytidine(1407) in 16S rRNA + S-adenosyl-L-methionine = 5-methylcytidine(1407) in 16S rRNA + S-adenosyl-L-homocysteine + H(+). Specifically methylates the cytosine at position 1407 (m5C1407) of 16S rRNA. The sequence is that of Ribosomal RNA small subunit methyltransferase F from Shewanella baltica (strain OS185).